Reading from the N-terminus, the 367-residue chain is Protein pxr1 (367 aa).

Disordered regions lie at residues 1–28 (MGLSAPKNKIKLSHDPNNTKWSGNTDSF) and 156–336 (KALK…PMGI). Positions 15–27 (DPNNTKWSGNTDS) are enriched in polar residues. One can recognise a G-patch domain in the interval 25–79 (TDSFGHRMMKSQGWTPGEYLGAKDAAHAEFHTAANASHIRVVIKDNNLGLGAKIG). The span at 167 to 182 (SSDDSDSSSDEEEEEK) shows a compositional bias: acidic residues. Composition is skewed to basic residues over residues 209 to 221 (SKKSKKDKKSKKR), 236 to 248 (KSKKSKKDRKSKS), and 265 to 277 (KARKKEKKEKKRR). Low complexity predominate over residues 282–296 (ATAGADTEETSSTSK). Basic residues predominate over residues 297–309 (SSKKNSKKDKHKS). Residues 310-328 (SSASESSTKESTPTVTESS) show a composition bias toward low complexity.

Belongs to the PINX1 family.

Its subcellular location is the nucleus. It is found in the nucleolus. Involved in rRNA-processing at A0, A1 and A2 sites and negatively regulates telomerase. This chain is Protein pxr1 (pxr1), found in Sclerotinia sclerotiorum (strain ATCC 18683 / 1980 / Ss-1) (White mold).